The sequence spans 524 residues: Indoleacetamide hydrolase (524 aa).

Composition is skewed to basic residues over residues 1–26 (MAKKTASKKKSVSRKVTKTSSKKATA) and 34–54 (AAKKSVKKAAPRKSATARRPK). The disordered stretch occupies residues 1 to 56 (MAKKTASKKKSVSRKVTKTSSKKATARKGAVAKAAKKSVKKAAPRKSATARRPKGP). Residues K133 and S208 each act as charge relay system in the active site. The active-site Acyl-ester intermediate is the S232.

It belongs to the amidase family.

It participates in plant hormone metabolism; auxin biosynthesis. Its function is as follows. Hydrolyzes indole-3-acetamide (IAM) into indole-3-acetic acid (IAA). In Bradyrhizobium diazoefficiens (strain JCM 10833 / BCRC 13528 / IAM 13628 / NBRC 14792 / USDA 110), this protein is Indoleacetamide hydrolase (bam).